A 143-amino-acid chain; its full sequence is MTKTIPKIGSRKKVRIGLRRNARFSLRKSARRITKGVIHVQASFNNTIITVTDPQGRVVFWSSAGTCGFKSSRKASPYAGQRTAVDAIRTVGLQRAEVMVKGAGSGRDAALRAIAKSGVRLSCIRDVTPMPHNGCRPPKKRRL.

Belongs to the universal ribosomal protein uS11 family. As to quaternary structure, part of the 30S ribosomal subunit.

Its subcellular location is the plastid. The protein resides in the chloroplast. This chain is Small ribosomal subunit protein uS11c, found in Cenchrus americanus (Pearl millet).